Here is a 215-residue protein sequence, read N- to C-terminus: UPF0502 protein YceH (215 aa).

K80 carries the post-translational modification N6-acetyllysine.

It belongs to the UPF0502 family.

This chain is UPF0502 protein YceH, found in Escherichia coli (strain K12 / MC4100 / BW2952).